Consider the following 312-residue polypeptide: Carbamate kinase 2 (312 aa).

Belongs to the carbamate kinase family.

The protein resides in the cytoplasm. The catalysed reaction is hydrogencarbonate + NH4(+) + ATP = carbamoyl phosphate + ADP + H2O + H(+). Its pathway is metabolic intermediate metabolism; carbamoyl phosphate degradation; CO(2) and NH(3) from carbamoyl phosphate: step 1/1. The sequence is that of Carbamate kinase 2 (arcC2) from Enterococcus faecalis (strain ATCC 700802 / V583).